The primary structure comprises 92 residues: Large ribosomal subunit protein bL34m (92 aa).

Residues 1–46 (MAFLARCFGCQACRSVALLSGRYLQSRVWMGLPDSWPLLSLQQARG) constitute a mitochondrion transit peptide. At Ser-71 the chain carries Phosphoserine.

This sequence belongs to the bacterial ribosomal protein bL34 family. Component of the mitochondrial ribosome large subunit (39S) which comprises a 16S rRNA and about 50 distinct proteins.

Its subcellular location is the mitochondrion. This Mus musculus (Mouse) protein is Large ribosomal subunit protein bL34m (Mrpl34).